A 300-amino-acid chain; its full sequence is Protein SPEAR4 (300 aa).

Residues 1–10 (MCSKTSSVSY) show a composition bias toward polar residues. Positions 1–45 (MCSKTSSVSYGNREDDDNYSSLCPKKQKHNNGGKKRVPRRGPGVA) are disordered. Over residues 25–39 (KKQKHNNGGKKRVPR) the composition is skewed to basic residues. An SPL motif is present at residues 40-48 (RGPGVAELE). Residues 294-300 (IDLRLKL) carry the EAR motif.

In terms of assembly, interacts with SPL and SPEAR2. Expressed in leaves.

Functionally, adapter-like transcriptional repressor recruiting TPL/TPR coepressors to inhibit TCP transcription factors. May be involved in leaf development. This is Protein SPEAR4 from Arabidopsis thaliana (Mouse-ear cress).